A 573-amino-acid chain; its full sequence is 2-succinyl-5-enolpyruvyl-6-hydroxy-3-cyclohexene-1-carboxylate synthase (573 aa).

Belongs to the TPP enzyme family. MenD subfamily. Homodimer. The cofactor is Mg(2+). Requires Mn(2+) as cofactor. It depends on thiamine diphosphate as a cofactor.

The enzyme catalyses isochorismate + 2-oxoglutarate + H(+) = 5-enolpyruvoyl-6-hydroxy-2-succinyl-cyclohex-3-ene-1-carboxylate + CO2. Its pathway is quinol/quinone metabolism; 1,4-dihydroxy-2-naphthoate biosynthesis; 1,4-dihydroxy-2-naphthoate from chorismate: step 2/7. It participates in quinol/quinone metabolism; menaquinone biosynthesis. Its function is as follows. Catalyzes the thiamine diphosphate-dependent decarboxylation of 2-oxoglutarate and the subsequent addition of the resulting succinic semialdehyde-thiamine pyrophosphate anion to isochorismate to yield 2-succinyl-5-enolpyruvyl-6-hydroxy-3-cyclohexene-1-carboxylate (SEPHCHC). This is 2-succinyl-5-enolpyruvyl-6-hydroxy-3-cyclohexene-1-carboxylate synthase from Shewanella sp. (strain ANA-3).